The chain runs to 360 residues: Phospho-N-acetylmuramoyl-pentapeptide-transferase (360 aa).

The next 10 helical transmembrane spans lie at 25–45 (RAIL…PTLI), 73–93 (TMGG…WADL), 97–117 (YVWV…VDDY), 128–148 (LIAK…AVYL), 168–188 (VMPQ…VGTS), 199–219 (GLAI…AYVS), 236–256 (TAEL…FLWF), 262–282 (LVFM…IIAI), 288–308 (LVLF…MLQV), and 338–358 (VIVR…ATLK).

Belongs to the glycosyltransferase 4 family. MraY subfamily. Requires Mg(2+) as cofactor.

The protein localises to the cell inner membrane. It carries out the reaction UDP-N-acetyl-alpha-D-muramoyl-L-alanyl-gamma-D-glutamyl-meso-2,6-diaminopimeloyl-D-alanyl-D-alanine + di-trans,octa-cis-undecaprenyl phosphate = di-trans,octa-cis-undecaprenyl diphospho-N-acetyl-alpha-D-muramoyl-L-alanyl-D-glutamyl-meso-2,6-diaminopimeloyl-D-alanyl-D-alanine + UMP. Its pathway is cell wall biogenesis; peptidoglycan biosynthesis. In terms of biological role, catalyzes the initial step of the lipid cycle reactions in the biosynthesis of the cell wall peptidoglycan: transfers peptidoglycan precursor phospho-MurNAc-pentapeptide from UDP-MurNAc-pentapeptide onto the lipid carrier undecaprenyl phosphate, yielding undecaprenyl-pyrophosphoryl-MurNAc-pentapeptide, known as lipid I. In Idiomarina loihiensis (strain ATCC BAA-735 / DSM 15497 / L2-TR), this protein is Phospho-N-acetylmuramoyl-pentapeptide-transferase.